A 506-amino-acid chain; its full sequence is Deoxyguanosinetriphosphate triphosphohydrolase (506 aa).

Positions 66 to 274 constitute an HD domain; that stretch reads RLTHSLEVQQ…MEAADDISYC (209 aa).

The protein belongs to the dGTPase family. Type 1 subfamily. Homotetramer. It depends on Mg(2+) as a cofactor.

It carries out the reaction dGTP + H2O = 2'-deoxyguanosine + triphosphate + H(+). Its function is as follows. dGTPase preferentially hydrolyzes dGTP over the other canonical NTPs. In Yersinia pseudotuberculosis serotype O:3 (strain YPIII), this protein is Deoxyguanosinetriphosphate triphosphohydrolase.